Here is a 609-residue protein sequence, read N- to C-terminus: Meiotically up-regulated gene 28 protein (609 aa).

2 consecutive RRM domains span residues 20-103 and 419-499; these read ISIY…YTHI and CNLF…YAEK.

It is found in the cytoplasm. Has a role in sporulation. The polypeptide is Meiotically up-regulated gene 28 protein (mug28) (Schizosaccharomyces pombe (strain 972 / ATCC 24843) (Fission yeast)).